Here is a 192-residue protein sequence, read N- to C-terminus: Peptidyl-tRNA hydrolase (192 aa).

Y17 contacts tRNA. H22 acts as the Proton acceptor in catalysis. TRNA-binding residues include Y68, N70, and N116.

This sequence belongs to the PTH family. In terms of assembly, monomer.

It is found in the cytoplasm. The enzyme catalyses an N-acyl-L-alpha-aminoacyl-tRNA + H2O = an N-acyl-L-amino acid + a tRNA + H(+). Its function is as follows. Hydrolyzes ribosome-free peptidyl-tRNAs (with 1 or more amino acids incorporated), which drop off the ribosome during protein synthesis, or as a result of ribosome stalling. In terms of biological role, catalyzes the release of premature peptidyl moieties from peptidyl-tRNA molecules trapped in stalled 50S ribosomal subunits, and thus maintains levels of free tRNAs and 50S ribosomes. In Mycobacterium sp. (strain JLS), this protein is Peptidyl-tRNA hydrolase.